Consider the following 204-residue polypeptide: Matrix-remodeling-associated protein 7 (204 aa).

The helical transmembrane segment at 7–27 (LLAALPALATALALLLAWLLV) threads the bilayer. The tract at residues 32–148 (AASPEPARAP…FSFKYSPGKL (117 aa)) is disordered. Positions 38-47 (ARAPPEPAPP) are enriched in pro residues. The segment covering 63–103 (EPAASPAGPEEPGEPAGLGELGEPAGPGEPEGPGDPAAAPA) has biased composition (low complexity). Residues 110–126 (VEARQEEEQDLDGEKGP) are compositionally biased toward basic and acidic residues. The residue at position 191 (S191) is a Phosphoserine.

The protein resides in the membrane. The polypeptide is Matrix-remodeling-associated protein 7 (MXRA7) (Homo sapiens (Human)).